A 622-amino-acid polypeptide reads, in one-letter code: Threonine--tRNA ligase (622 aa).

The segment at 1–141 (MKTLLIHSDY…SRKITTERKE (141 aa)) is editing domain. Residues 199 to 498 (PHVKYIKEKE…TLENRPPALP (300 aa)) form a catalytic region. Positions 291, 343, and 467 each coordinate Zn(2+).

Belongs to the class-II aminoacyl-tRNA synthetase family. Homodimer. Zn(2+) serves as cofactor.

It is found in the cytoplasm. It catalyses the reaction tRNA(Thr) + L-threonine + ATP = L-threonyl-tRNA(Thr) + AMP + diphosphate + H(+). Functionally, catalyzes the attachment of threonine to tRNA(Thr) in a two-step reaction: L-threonine is first activated by ATP to form Thr-AMP and then transferred to the acceptor end of tRNA(Thr). Also edits incorrectly charged L-seryl-tRNA(Thr). The polypeptide is Threonine--tRNA ligase (Methanococcus maripaludis (strain C6 / ATCC BAA-1332)).